Consider the following 445-residue polypeptide: MSTILESLPTGQKVGIAFSGGLDTSAALHWMKLKGAVPYAYTANLGQPDEDDYDAIPKRAIEYGAAGARLIDCRAQLVAEGIAALQSGAFHITTAGVTYFNTTPIGRAVTGTMLVAAMKEDGVNIWGDGSTYKGNDIERFYRYGLLVNPDLKIYKPWLDQTFIDELGGRAEMSEFMNQAGFAYKMSAEKAYSTDSNLLGATHEAKDLESLESGIKIVNPIMGVAFWRDDVKIAAEEVTVRFEAGQPVALNGVEYKDPVELLLEANRIGGRHGLGMSDQIENRIIEAKSRGIYEAPGLALLYIAYERLVTGIHNEDTIEQYRENGRRLGRLLYQGRWFDPQAIMLRETAQRWVARAITGEVKIELRRGNDYSILSTKSPNLTYQPERLSMEKVASTFSPRDRIGQLTMRNLDITDTRDKLRVYSQVGLLTPGESSALPQIKGDSDK.

Residues 17-25 (AFSGGLDTS) and Ala-43 each bind ATP. Tyr-99 is a binding site for L-citrulline. Residues Gly-129 and Thr-131 each contribute to the ATP site. The L-aspartate site is built by Thr-131, Asn-135, and Asp-136. Asn-135 is a binding site for L-citrulline. Asp-136 lines the ATP pocket. Residues Arg-139 and Ser-192 each coordinate L-citrulline. Asp-194 contributes to the ATP binding site. Residues Thr-201, Glu-203, and Glu-280 each contribute to the L-citrulline site.

This sequence belongs to the argininosuccinate synthase family. Type 2 subfamily. As to quaternary structure, homotetramer.

It is found in the cytoplasm. It catalyses the reaction L-citrulline + L-aspartate + ATP = 2-(N(omega)-L-arginino)succinate + AMP + diphosphate + H(+). It participates in amino-acid biosynthesis; L-arginine biosynthesis; L-arginine from L-ornithine and carbamoyl phosphate: step 2/3. The protein is Argininosuccinate synthase of Burkholderia ambifaria (strain ATCC BAA-244 / DSM 16087 / CCUG 44356 / LMG 19182 / AMMD) (Burkholderia cepacia (strain AMMD)).